Here is a 217-residue protein sequence, read N- to C-terminus: Large ribosomal subunit protein uL1A (217 aa).

Serine 2 is modified (N-acetylserine). The residue at position 47 (lysine 47) is an N6-methyllysine; by RKM5. Residues serine 79 and serine 86 each carry the phosphoserine modification.

The protein belongs to the universal ribosomal protein uL1 family. In terms of assembly, component of the large ribosomal subunit (LSU). Mature yeast ribosomes consist of a small (40S) and a large (60S) subunit. The 40S small subunit contains 1 molecule of ribosomal RNA (18S rRNA) and 33 different proteins (encoded by 57 genes). The large 60S subunit contains 3 rRNA molecules (25S, 5.8S and 5S rRNA) and 46 different proteins (encoded by 81 genes). uL1 forms part of the L1 stalk. N-terminally acetylated by acetyltransferase NatA.

It localises to the cytoplasm. Functionally, component of the ribosome, a large ribonucleoprotein complex responsible for the synthesis of proteins in the cell. The small ribosomal subunit (SSU) binds messenger RNAs (mRNAs) and translates the encoded message by selecting cognate aminoacyl-transfer RNA (tRNA) molecules. The large subunit (LSU) contains the ribosomal catalytic site termed the peptidyl transferase center (PTC), which catalyzes the formation of peptide bonds, thereby polymerizing the amino acids delivered by tRNAs into a polypeptide chain. The nascent polypeptides leave the ribosome through a tunnel in the LSU and interact with protein factors that function in enzymatic processing, targeting, and the membrane insertion of nascent chains at the exit of the ribosomal tunnel. uL1 forms part of the L1 stalk, a mobile element that plays a role in evacuating the exit-site tRNA. The polypeptide is Large ribosomal subunit protein uL1A (Saccharomyces cerevisiae (strain ATCC 204508 / S288c) (Baker's yeast)).